The chain runs to 291 residues: Protease HtpX (291 aa).

2 helical membrane-spanning segments follow: residues 4–24 and 36–56; these read ILLF…TLKL and GSLL…SLFI. His-142 is a binding site for Zn(2+). Glu-143 is a catalytic residue. Position 146 (His-146) interacts with Zn(2+). The next 2 helical transmembrane spans lie at 150-170 and 193-213; these read GDMV…MFFA and FVAT…IVMW. Residue Glu-219 coordinates Zn(2+).

The protein belongs to the peptidase M48B family. It depends on Zn(2+) as a cofactor.

The protein localises to the cell inner membrane. The chain is Protease HtpX from Pseudomonas aeruginosa (strain LESB58).